We begin with the raw amino-acid sequence, 192 residues long: Apoptosis regulator BAX (192 aa).

Met1 carries the post-translational modification N-acetylmethionine. A BH3 motif is present at residues 59–73; sequence LSECLRRIGDELDSN. Positions 98 to 118 match the BH1 motif; sequence DMFADGNFNWGRVVALFYFAS. Residue Lys128 forms a Glycyl lysine isopeptide (Lys-Gly) (interchain with G-Cter in ubiquitin) linkage. A BH2 motif is present at residues 150–165; sequence VWIQDQGGWEGLLSYF. Residues 172 to 192 traverse the membrane as a helical segment; sequence TVTIFVAGVLTASLTIWKKMG. Residue Lys190 forms a Glycyl lysine isopeptide (Lys-Gly) (interchain with G-Cter in ubiquitin) linkage.

The protein belongs to the Bcl-2 family. Homodimer. Forms higher oligomers under stress conditions. Forms heterooligomers with BAK. Interacts with BCL2L11. Interaction with BCL2L11 promotes BAX oligomerization and association with mitochondrial membranes, with subsequent release of cytochrome c. Forms heterodimers with BCL2. Forms heterodimers with BCL2L1 isoform Bcl-X(L), BCL2L2, MCL1 and A1. Interacts with SH3GLB1. Interacts with SFN and YWHAZ; the interaction occurs in the cytoplasm. Under stress conditions, JNK-mediated phosphorylation of SFN and YWHAZ, releases BAX to mitochondria. Interacts with RNF144B, which regulates the ubiquitin-dependent stability of BAX. Interacts with CLU under stress conditions that cause a conformation change leading to BAX oligomerization and association with mitochondria. Does not interact with CLU in unstressed cells. Interacts with FAIM2/LFG2. Interacts with BOP. Interacts (via a C-terminal 33 residues) with NOL3 (via CARD domain); inhibits BAX activation and translocationand consequently cytochrome c release from mitochondria. Interacts with GIMAP3/IAN4 and GIMAP5/IAN5; this interaction is increased, when cells initiate apoptosis upon IL2 withdrawal. Interacts with IRF3; the interaction is direct and, upon virus infection, mediates the formation of the apoptosis complex TOMM70:HSP90AA1:IRF3:BAX. Interacts with MOAP1, facilitating BAX-dependent mitochondrial outer membrane permeabilization and apoptosis. Interacts with BCL2L10/BCL-B. Interacts with non-acetylated XRCC6/Ku70; this interaction leads to BAX sequestration in the cytosol, away from the mitochondria, preventing BAX-mediated apoptosis. In terms of assembly, (Microbial infection) Interacts with gamma-herpesvirus 68 protein vBCL2. Ubiquitinated in the absence of XRCC6/Ku70. Ubiquitinated on Lys-128 and Lys-190. 'Lys-63'-linked polyubiquitin chains on Lys-128 are removed by USP12. Expressed in a wide variety of tissues.

The protein localises to the mitochondrion outer membrane. It is found in the cytoplasm. The protein resides in the nucleus. Functionally, accelerates programmed cell death by binding to, and antagonizing the apoptosis repressor BCL2 or its adenovirus homolog E1B 19k protein. Under stress conditions, undergoes a conformation change that causes translocation to the mitochondrion membrane, leading to the release of cytochrome c that then triggers apoptosis. Promotes activation of CASP3, and thereby apoptosis. BAX deficiency leads to lymphoid hyperplasia and male sterility, because of the cessation of sperm production. The chain is Apoptosis regulator BAX (Bax) from Mus musculus (Mouse).